Here is a 547-residue protein sequence, read N- to C-terminus: Vacuolar fusion protein MON1 homolog B (547 aa).

The residue at position 1 (M1) is an N-acetylmethionine. Over residues 1–15 the composition is skewed to low complexity; it reads MEVGGDTAAPAPGGA. The segment at 1–106 is disordered; the sequence is MEVGGDTAAP…GGDPSDEEWR (106 aa). Phosphoserine is present on residues S59 and S61.

This sequence belongs to the MON1/SAND family. As to quaternary structure, interacts with CCNT2; down-regulates CCNT2-mediated activation of viral promoters during herpes simplex virus 1/HHV-1 infection. Found in a complex with RMC1, CCZ1 MON1A and MON1B.

This is Vacuolar fusion protein MON1 homolog B (MON1B) from Homo sapiens (Human).